The primary structure comprises 410 residues: ORC1-type DNA replication protein 4 (410 aa).

ATP is bound by residues 73-77, Tyr220, and Arg232; that span reads TGKSL.

The protein belongs to the CDC6/cdc18 family.

Functionally, involved in regulation of DNA replication. The polypeptide is ORC1-type DNA replication protein 4 (orc4) (Halobacterium salinarum (strain ATCC 700922 / JCM 11081 / NRC-1) (Halobacterium halobium)).